The primary structure comprises 312 residues: D-apiose import binding protein (312 aa).

Residues 1-26 (MKASKRWVALAAATLTLFTATGTAQA) form the signal peptide. D-apiofuranose contacts are provided by residues Asn39, 115–116 (DR), 162–164 (DIN), Arg168, Asn218, Asp243, and Gln263.

The protein belongs to the bacterial solute-binding protein 2 family.

It is found in the periplasm. Its function is as follows. Part of an ABC transporter complex involved in D-apiose import. Binds D-apiose, D-ribose and D-ribulose. This Paraburkholderia graminis (strain ATCC 700544 / DSM 17151 / LMG 18924 / NCIMB 13744 / C4D1M) protein is D-apiose import binding protein.